The chain runs to 426 residues: D-tagatose-1,6-bisphosphate aldolase subunit KbaZ (426 aa).

This sequence belongs to the GatZ/KbaZ family. KbaZ subfamily. As to quaternary structure, forms a complex with KbaY.

It participates in carbohydrate metabolism; D-tagatose 6-phosphate degradation; D-glyceraldehyde 3-phosphate and glycerone phosphate from D-tagatose 6-phosphate: step 2/2. In terms of biological role, component of the tagatose-1,6-bisphosphate aldolase KbaYZ that is required for full activity and stability of the Y subunit. Could have a chaperone-like function for the proper and stable folding of KbaY. When expressed alone, KbaZ does not show any aldolase activity. The sequence is that of D-tagatose-1,6-bisphosphate aldolase subunit KbaZ from Escherichia coli (strain 55989 / EAEC).